A 776-amino-acid polypeptide reads, in one-letter code: U3 small nucleolar RNA-associated protein 4 (776 aa).

WD repeat units lie at residues 35-40, 132-169, 178-214, 230-266, 271-308, and 417-452; these read RCRFVD, LPLR…VLID, EHDT…RIWS, KVDK…KFWD, TLNQ…FQFS, and VCKL…KVFH.

As to quaternary structure, interacts with snoRNA U3. Interacts with MPP10. Component of the ribosomal small subunit (SSU) processome composed of at least 40 protein subunits and snoRNA U3. In the absence of snoRNA3, forms a complex with other t-UTPs. This complex can associate with pre-18S ribosomal RNAs.

It localises to the nucleus. Its subcellular location is the nucleolus. In terms of biological role, involved in nucleolar processing of pre-18S ribosomal RNA. Required for optimal pre-ribosomal RNA transcription by RNA polymerase I together with a subset of U3 proteins required for transcription (t-UTPs). This chain is U3 small nucleolar RNA-associated protein 4 (UTP4), found in Saccharomyces cerevisiae (strain ATCC 204508 / S288c) (Baker's yeast).